A 324-amino-acid chain; its full sequence is 4-hydroxy-2-oxoglutarate aldolase, mitochondrial (324 aa).

Residues 1–22 (MFAHRSFSLLCRRSAVTSWRSQ) constitute a mitochondrion transit peptide. 74-75 (SN) contributes to the substrate binding site. K193 acts as the Schiff-base intermediate with substrate in catalysis. Residues S195 and G219 each contribute to the substrate site.

Belongs to the DapA family. Homotetramer.

It is found in the mitochondrion. The catalysed reaction is (4S)-4-hydroxy-2-oxoglutarate = glyoxylate + pyruvate. It catalyses the reaction (4R)-4-hydroxy-2-oxoglutarate = glyoxylate + pyruvate. Its activity is regulated as follows. Inhibited by divalent cations. Functionally, catalyzes the final step in the metabolic pathway of hydroxyproline. This is 4-hydroxy-2-oxoglutarate aldolase, mitochondrial from Danio rerio (Zebrafish).